Reading from the N-terminus, the 254-residue chain is RxLR effector protein CRE5 (254 aa).

An N-terminal signal peptide occupies residues 1-19 (MQTIQLIIFVAFVLSRAAA). N49 carries an N-linked (GlcNAc...) asparagine glycan. The short motif at 53–63 (RSLRQHEGEDR) is the RxLR-dEER element. Residues 191 to 254 (SRWLSAGVVT…MEEGGVCRAL (64 aa)) form the Nudix hydrolase domain. The short motif at 228-249 (GGWDRGEKIKKAALREVMEEGG) is the Nudix box element.

In the N-terminal section; belongs to the RxLR effector family. It in the C-terminal section; belongs to the Nudix hydrolase family.

The protein localises to the secreted. It localises to the host cytoplasm. Its subcellular location is the host nucleus. The protein resides in the host nucleolus. Effector that is involved in host plant infection. Contributes to virulence during the early infection stage, by inhibiting plant defense responses induced by both PAMP-triggered immunity (PTI) and effector-triggered immunity (ETI). This chain is RxLR effector protein CRE5, found in Phytophthora infestans (strain T30-4) (Potato late blight agent).